Here is a 224-residue protein sequence, read N- to C-terminus: dTTP/UTP pyrophosphatase (224 aa).

Asp-77 functions as the Proton acceptor in the catalytic mechanism.

It belongs to the Maf family. YhdE subfamily. Requires a divalent metal cation as cofactor.

The protein localises to the cytoplasm. It catalyses the reaction dTTP + H2O = dTMP + diphosphate + H(+). It carries out the reaction UTP + H2O = UMP + diphosphate + H(+). Nucleoside triphosphate pyrophosphatase that hydrolyzes dTTP and UTP. May have a dual role in cell division arrest and in preventing the incorporation of modified nucleotides into cellular nucleic acids. This chain is dTTP/UTP pyrophosphatase, found in Dehalococcoides mccartyi (strain ATCC BAA-2100 / JCM 16839 / KCTC 5957 / BAV1).